The primary structure comprises 134 residues: Small ribosomal subunit protein bS6 (134 aa).

A disordered region spans residues 99–134; sequence PSQLAKSADEKRARKAPRSENFDNDQDDESNDDSDE. Over residues 105–119 the composition is skewed to basic and acidic residues; the sequence is SADEKRARKAPRSEN. Residues 120-134 show a composition bias toward acidic residues; the sequence is FDNDQDDESNDDSDE.

Belongs to the bacterial ribosomal protein bS6 family.

Its function is as follows. Binds together with bS18 to 16S ribosomal RNA. The sequence is that of Small ribosomal subunit protein bS6 from Psychrobacter sp. (strain PRwf-1).